The following is a 287-amino-acid chain: ATP synthase gamma chain (287 aa).

It belongs to the ATPase gamma chain family. As to quaternary structure, F-type ATPases have 2 components, CF(1) - the catalytic core - and CF(0) - the membrane proton channel. CF(1) has five subunits: alpha(3), beta(3), gamma(1), delta(1), epsilon(1). CF(0) has three main subunits: a, b and c.

It localises to the cell inner membrane. Produces ATP from ADP in the presence of a proton gradient across the membrane. The gamma chain is believed to be important in regulating ATPase activity and the flow of protons through the CF(0) complex. This chain is ATP synthase gamma chain, found in Serratia proteamaculans (strain 568).